The primary structure comprises 543 residues: 2,3-bisphosphoglycerate-independent phosphoglycerate mutase (543 aa).

The Mn(2+) site is built by Asp20 and Ser73. Ser73 acts as the Phosphoserine intermediate in catalysis. Residues His134, Arg166–Asp167, Arg198, Arg204, Arg278–Arg281, and Lys360 contribute to the substrate site. The Mn(2+) site is built by Asp428, His432, Asp469, His470, and His488.

It belongs to the BPG-independent phosphoglycerate mutase family. In terms of assembly, monomer. Mn(2+) is required as a cofactor.

The catalysed reaction is (2R)-2-phosphoglycerate = (2R)-3-phosphoglycerate. Its pathway is carbohydrate degradation; glycolysis; pyruvate from D-glyceraldehyde 3-phosphate: step 3/5. Catalyzes the interconversion of 2-phosphoglycerate and 3-phosphoglycerate. The chain is 2,3-bisphosphoglycerate-independent phosphoglycerate mutase from Rhodopirellula baltica (strain DSM 10527 / NCIMB 13988 / SH1).